Consider the following 110-residue polypeptide: MDKRNKANVVLSLCSMFASRGNCIPIPIVFNIYMRAFPKLVGRGTSTYARRRRARSILRCERCYRVYPPLPFSKKCDNRTCVPGISYNIKVADFIKWGVTEVIPHPGFNF.

Residues 50–53 (RRRR) form a basic region. The C4-type zinc-finger motif lies at 60–81 (CERCYRVYPPLPFSKKCDNRTC).

Belongs to the carlaviruses nucleic acid-binding protein family.

Functionally, suppressor of viral-induced RNA silencing. The potential mechanism of action is based on sequestering siRNAs. This Helenium virus S (HelVS) protein is RNA silencing suppressor.